Consider the following 150-residue polypeptide: Putative ribosome maturation factor RimP (150 aa).

Belongs to the RimP family.

It is found in the cytoplasm. Functionally, required for maturation of 30S ribosomal subunits. The polypeptide is Putative ribosome maturation factor RimP (Mycobacterium leprae (strain TN)).